The primary structure comprises 122 residues: Large ribosomal subunit protein bL12 (122 aa).

It belongs to the bacterial ribosomal protein bL12 family. As to quaternary structure, homodimer. Part of the ribosomal stalk of the 50S ribosomal subunit. Forms a multimeric L10(L12)X complex, where L10 forms an elongated spine to which 2 to 4 L12 dimers bind in a sequential fashion. Binds GTP-bound translation factors.

Functionally, forms part of the ribosomal stalk which helps the ribosome interact with GTP-bound translation factors. Is thus essential for accurate translation. The polypeptide is Large ribosomal subunit protein bL12 (Borrelia hermsii (strain HS1 / DAH)).